The sequence spans 285 residues: Glutamate racemase (285 aa).

Substrate contacts are provided by residues 28–29 (DS) and 60–61 (YG). Residue cysteine 92 is the Proton donor/acceptor of the active site. Residue 93–94 (NT) coordinates substrate. The active-site Proton donor/acceptor is the cysteine 204. 205 to 206 (TH) is a substrate binding site.

The protein belongs to the aspartate/glutamate racemases family.

The enzyme catalyses L-glutamate = D-glutamate. The protein operates within cell wall biogenesis; peptidoglycan biosynthesis. In terms of biological role, provides the (R)-glutamate required for cell wall biosynthesis. The polypeptide is Glutamate racemase (Escherichia coli O6:H1 (strain CFT073 / ATCC 700928 / UPEC)).